We begin with the raw amino-acid sequence, 75 residues long: Dermaseptin-SP3 (75 aa).

The signal sequence occupies residues 1–22 (MAFLKKSLFLVLFLGLVSLSMC). Positions 23–45 (EEEKRENEVEEEQEDDEQSELRR) are excised as a propeptide. Proline amide is present on proline 72. Residues 74–75 (EQ) constitute a propeptide that is removed on maturation.

The protein belongs to the frog skin active peptide (FSAP) family. Dermaseptin subfamily. As to expression, expressed by the skin glands.

It is found in the secreted. The protein localises to the target cell membrane. Antimicrobial peptide with activity against Gram-positive and Gram-negative bacteria and fungi. Has been tested against E.coli (MIC=47.50-128 uM), S.aureus (MIC=189.98-512 uM), K.pneumoniae (MIC&gt;189.98 uM) and C.albicans (MIC&gt;189.98 uM). Probably acts by disturbing membrane functions with its alpha-helical amphipathic structure. May penetrate bacterial membranes, but stay at the mammalian membrane surface. Shows a very weak hemolytic activity. The polypeptide is Dermaseptin-SP3 (Agalychnis spurrelli (Gliding leaf frog)).